Here is a 224-residue protein sequence, read N- to C-terminus: MTAPQEPEDAAGSIFSTSGDRAVADAAERAKVTASRNIPVFDDLPLPADTANLRKGVDFNDALLALLPLVGVWRGEGEGRGPHGDYRFGQQIVVSHDGGDYLNWEARSWRLTESGEYDRVGLRETGFWRFVSDPADPSESQAIELLLAHSAGYIELFYGHPRNQSSWELVTDALARSKSGMLVGGAKRLYGIVEGGDLAYVEERVDADGGLVPHLSARLARYVG.

The GXWXGXG motif lies at 71 to 77 (GVWRGEG). 2 residues coordinate heme b: Lys187 and His214.

It belongs to the nitrobindin family. As to quaternary structure, homodimer. It depends on heme b as a cofactor.

The catalysed reaction is peroxynitrite = nitrate. It functions in the pathway nitrogen metabolism. Heme-binding protein able to scavenge peroxynitrite and to protect free L-tyrosine against peroxynitrite-mediated nitration, by acting as a peroxynitrite isomerase that converts peroxynitrite to nitrate. Therefore, this protein likely plays a role in peroxynitrite sensing and in the detoxification of reactive nitrogen and oxygen species (RNS and ROS, respectively). Is able to bind nitric oxide (NO) in vitro, but may act as a sensor of peroxynitrite levels in vivo. This chain is Peroxynitrite isomerase 2, found in Mycobacterium sp. (strain JLS).